The primary structure comprises 89 residues: Defensin-like protein 108 (89 aa).

Positions 1 to 20 (MTSLIAFLFTVLVIVSSVHC) are cleaved as a signal peptide. 4 cysteine pairs are disulfide-bonded: Cys39/Cys81, Cys49/Cys71, Cys57/Cys79, and Cys61/Cys80.

The protein belongs to the DEFL family.

It localises to the secreted. The sequence is that of Defensin-like protein 108 (LCR51) from Arabidopsis thaliana (Mouse-ear cress).